A 96-amino-acid chain; its full sequence is Small ribosomal subunit protein bS18 (96 aa).

Belongs to the bacterial ribosomal protein bS18 family. As to quaternary structure, part of the 30S ribosomal subunit. Forms a tight heterodimer with protein bS6.

Functionally, binds as a heterodimer with protein bS6 to the central domain of the 16S rRNA, where it helps stabilize the platform of the 30S subunit. This chain is Small ribosomal subunit protein bS18, found in Borreliella afzelii (strain PKo) (Borrelia afzelii).